An 809-amino-acid polypeptide reads, in one-letter code: Glycerol-3-phosphate acyltransferase (809 aa).

Residues His-306–Asp-311 carry the HXXXXD motif motif.

This sequence belongs to the GPAT/DAPAT family.

Its subcellular location is the cell inner membrane. It carries out the reaction sn-glycerol 3-phosphate + an acyl-CoA = a 1-acyl-sn-glycero-3-phosphate + CoA. Its pathway is phospholipid metabolism; CDP-diacylglycerol biosynthesis; CDP-diacylglycerol from sn-glycerol 3-phosphate: step 1/3. This Vibrio vulnificus (strain YJ016) protein is Glycerol-3-phosphate acyltransferase.